The sequence spans 302 residues: uncharacterized protein (302 aa).

Disordered regions lie at residues 15 to 34 (RHST…RFHK), 143 to 195 (GMPL…PSHL), and 221 to 246 (GSEA…RESV). A compositionally biased stretch (basic and acidic residues) spans 172–189 (HSDENKATGQGRENRDQP).

This is an uncharacterized protein from Homo sapiens (Human).